A 637-amino-acid polypeptide reads, in one-letter code: Probable ATP-binding protein YheS (637 aa).

2 consecutive ABC transporter domains span residues 2-246 (IVFS…AQQQ) and 313-527 (LKME…KQEN). ATP-binding positions include 34–41 (GKNGCGKS) and 345–352 (GRNGAGKS). The segment at 523 to 559 (QKQENQTDEAPKENANSAQARKDQKRREAELRAQTQP) is disordered. The segment covering 542-553 (ARKDQKRREAEL) has biased composition (basic and acidic residues).

Belongs to the ABC transporter superfamily. ABCF family. YheS subfamily.

Genetic data indicate it may be involved in ribosome assembly or function. Ectopic expression exacerbates the cold-sensitive growth phenotype of a bipA deletion. The protein is Probable ATP-binding protein YheS (yheS) of Escherichia coli O6:H1 (strain CFT073 / ATCC 700928 / UPEC).